A 114-amino-acid polypeptide reads, in one-letter code: T-cell leukemia/lymphoma protein 1A (114 aa).

This sequence belongs to the TCL1 family. Homodimer. Interacts with AKT1, AKT2 and AKT3 (via PH domain). Interacts with PNPT1; the interaction has no effect on PNPT1 exonuclease activity. Restricted in the T-cell lineage to immature thymocytes and activated peripheral lymphocytes. Preferentially expressed early in T- and B-lymphocyte differentiation.

Its subcellular location is the cytoplasm. The protein resides in the nucleus. It localises to the microsome. The protein localises to the endoplasmic reticulum. In terms of biological role, enhances the phosphorylation and activation of AKT1, AKT2 and AKT3. Promotes nuclear translocation of AKT1. Enhances cell proliferation, stabilizes mitochondrial membrane potential and promotes cell survival. The chain is T-cell leukemia/lymphoma protein 1A (TCL1A) from Homo sapiens (Human).